Here is a 1282-residue protein sequence, read N- to C-terminus: ATP-dependent helicase/nuclease subunit A (1282 aa).

One can recognise a UvrD-like helicase ATP-binding domain in the interval 10–481; it reads SKWTDSQRQV…IELQENFRSS (472 aa). ATP is bound at residue 31 to 38; it reads AGAGAGKT. The UvrD-like helicase C-terminal domain maps to 516-820; sequence KPRELYLNED…RLMSIHKSKG (305 aa).

This sequence belongs to the helicase family. AddA subfamily. Heterodimer of AddA and AddB/RexB. The cofactor is Mg(2+).

The enzyme catalyses Couples ATP hydrolysis with the unwinding of duplex DNA by translocating in the 3'-5' direction.. It catalyses the reaction ATP + H2O = ADP + phosphate + H(+). The heterodimer acts as both an ATP-dependent DNA helicase and an ATP-dependent, dual-direction single-stranded exonuclease. Recognizes the chi site generating a DNA molecule suitable for the initiation of homologous recombination. The AddA nuclease domain is required for chi fragment generation; this subunit has the helicase and 3' -&gt; 5' nuclease activities. In Natranaerobius thermophilus (strain ATCC BAA-1301 / DSM 18059 / JW/NM-WN-LF), this protein is ATP-dependent helicase/nuclease subunit A.